Consider the following 158-residue polypeptide: MTLKTIEGTFIAPKGRYALVVGRFNSFVVESLVSGAVDALVRHGVAESEITIIRAPGAFEIPLVTQKVAQQGGFDAIIALGAVIRGGTPHFEYVAGECTKGLAQVSLQFGIPVAFGVLTVDSIEQAIERSGTKAGNKGAEAALSALEMVSLLAQLEAK.

5-amino-6-(D-ribitylamino)uracil-binding positions include Phe-24, 58-60 (AFE), and 82-84 (AVI). Residue 87–88 (GT) coordinates (2S)-2-hydroxy-3-oxobutyl phosphate. Residue His-90 is the Proton donor of the active site. Phe-115 is a 5-amino-6-(D-ribitylamino)uracil binding site. (2S)-2-hydroxy-3-oxobutyl phosphate is bound at residue Arg-129.

This sequence belongs to the DMRL synthase family. In terms of assembly, forms an icosahedral capsid composed of 60 subunits, arranged as a dodecamer of pentamers.

The catalysed reaction is (2S)-2-hydroxy-3-oxobutyl phosphate + 5-amino-6-(D-ribitylamino)uracil = 6,7-dimethyl-8-(1-D-ribityl)lumazine + phosphate + 2 H2O + H(+). The protein operates within cofactor biosynthesis; riboflavin biosynthesis; riboflavin from 2-hydroxy-3-oxobutyl phosphate and 5-amino-6-(D-ribitylamino)uracil: step 1/2. Its function is as follows. Catalyzes the formation of 6,7-dimethyl-8-ribityllumazine by condensation of 5-amino-6-(D-ribitylamino)uracil with 3,4-dihydroxy-2-butanone 4-phosphate. This is the penultimate step in the biosynthesis of riboflavin. This chain is 6,7-dimethyl-8-ribityllumazine synthase, found in Pseudomonas paraeruginosa (strain DSM 24068 / PA7) (Pseudomonas aeruginosa (strain PA7)).